Reading from the N-terminus, the 162-residue chain is NADH-quinone oxidoreductase subunit I (162 aa).

2 consecutive 4Fe-4S ferredoxin-type domains span residues 54 to 83 (RRYE…INST) and 93 to 122 (SSYE…ETNI). Positions 63, 66, 69, 73, 102, 105, 108, and 112 each coordinate [4Fe-4S] cluster.

The protein belongs to the complex I 23 kDa subunit family. As to quaternary structure, NDH-1 is composed of 14 different subunits. Subunits NuoA, H, J, K, L, M, N constitute the membrane sector of the complex. It depends on [4Fe-4S] cluster as a cofactor.

The protein localises to the cell inner membrane. It catalyses the reaction a quinone + NADH + 5 H(+)(in) = a quinol + NAD(+) + 4 H(+)(out). In terms of biological role, NDH-1 shuttles electrons from NADH, via FMN and iron-sulfur (Fe-S) centers, to quinones in the respiratory chain. The immediate electron acceptor for the enzyme in this species is believed to be ubiquinone. Couples the redox reaction to proton translocation (for every two electrons transferred, four hydrogen ions are translocated across the cytoplasmic membrane), and thus conserves the redox energy in a proton gradient. The sequence is that of NADH-quinone oxidoreductase subunit I from Francisella tularensis subsp. tularensis (strain FSC 198).